The chain runs to 89 residues: Dolichol-phosphate mannose synthase subunit 3 (89 aa).

The next 2 membrane-spanning stretches (helical) occupy residues 7 to 27 and 33 to 53; these read ILSL…AAII and WLLP…MVGV.

It belongs to the DPM3 family. In terms of assembly, component of the dolichol-phosphate mannose (DPM) synthase complex composed of DPMS1, DPMS2 and DPMS3; in the complex interacts directly with DPMS1 and DPMS2.

The protein resides in the endoplasmic reticulum membrane. The protein operates within protein modification; protein glycosylation. Regulates the biosynthesis of dolichol phosphate-mannose. Regulatory subunit of the dolichol-phosphate mannose (DPM) synthase complex; essential for the ER localization and stable expression of DPMS1. This Arabidopsis thaliana (Mouse-ear cress) protein is Dolichol-phosphate mannose synthase subunit 3.